Reading from the N-terminus, the 171-residue chain is 3-hydroxydecanoyl-[acyl-carrier-protein] dehydratase (171 aa).

Residue H70 is part of the active site.

Belongs to the thioester dehydratase family. FabA subfamily. As to quaternary structure, homodimer.

It is found in the cytoplasm. It catalyses the reaction a (3R)-hydroxyacyl-[ACP] = a (2E)-enoyl-[ACP] + H2O. It carries out the reaction (3R)-hydroxydecanoyl-[ACP] = (2E)-decenoyl-[ACP] + H2O. The enzyme catalyses (2E)-decenoyl-[ACP] = (3Z)-decenoyl-[ACP]. The protein operates within lipid metabolism; fatty acid biosynthesis. In terms of biological role, necessary for the introduction of cis unsaturation into fatty acids. Catalyzes the dehydration of (3R)-3-hydroxydecanoyl-ACP to E-(2)-decenoyl-ACP and then its isomerization to Z-(3)-decenoyl-ACP. Can catalyze the dehydratase reaction for beta-hydroxyacyl-ACPs with saturated chain lengths up to 16:0, being most active on intermediate chain length. This chain is 3-hydroxydecanoyl-[acyl-carrier-protein] dehydratase, found in Shewanella sp. (strain MR-4).